Reading from the N-terminus, the 270-residue chain is Secreted RxLR effector protein 149 (270 aa).

The N-terminal stretch at Met1–Ala21 is a signal peptide. A RxLR-dEER motif is present at residues Arg43–Arg58.

Belongs to the RxLR effector family.

It localises to the secreted. The protein localises to the host nucleus. It is found in the host cytoplasm. Functionally, secreted effector that completely suppresses the host cell death induced by cell death-inducing proteins. This Plasmopara viticola (Downy mildew of grapevine) protein is Secreted RxLR effector protein 149.